The sequence spans 899 residues: Auxin response factor 25 (899 aa).

Residues 1 to 20 are disordered; that stretch reads MKLSPPASADMPQALPENDG. Residues 132–234 constitute a DNA-binding region (TF-B3); it reads FCKTLTASDT…QLLLGIRRAN (103 aa). Positions 546–564 are enriched in low complexity; the sequence is RQHVLQEQSSQEMQQQLPS. The interval 546-586 is disordered; that stretch reads RQHVLQEQSSQEMQQQLPSSDHHVADVASESGSAPQAQSSL. Positions 575–586 are enriched in polar residues; the sequence is ESGSAPQAQSSL. A PB1 domain is found at 766-850; it reads ATFVKVYKSG…WCIKILSPQE (85 aa).

It belongs to the ARF family. As to quaternary structure, homodimers and heterodimers. As to expression, expressed in roots, culms, leaves and young panicles.

Its subcellular location is the nucleus. In terms of biological role, auxin response factors (ARFs) are transcriptional factors that bind specifically to the DNA sequence 5'-TGTCTC-3' found in the auxin-responsive promoter elements (AuxREs). The protein is Auxin response factor 25 (ARF25) of Oryza sativa subsp. japonica (Rice).